An 873-amino-acid chain; its full sequence is Inner centromere protein A (873 aa).

Disordered regions lie at residues 50-124 (AEPE…KRMT), 237-270 (PANE…VVRK), 282-452 (FSLA…PPPH), 484-535 (KRNT…KVRR), 566-649 (QIDE…LAEQ), 683-736 (LERA…EQAA), and 781-800 (DLNS…PIPA). Over residues 60–69 (SQKRRRKKRT) the composition is skewed to basic residues. Residues 87-105 (RQSNASWSSSVRRLSVRNQ) show a composition bias toward low complexity. Polar residues predominate over residues 239–254 (NEQQLNLSNQSATPTG). The segment covering 261-270 (SVRRSLVVRK) has biased composition (basic residues). A compositionally biased stretch (basic and acidic residues) spans 286–297 (SKRESMTREAVR). The span at 314–325 (SSTSSQRSYQSS) shows a compositional bias: low complexity. Residues 437-452 (PSPPCPPSKIVRPPPH) show a composition bias toward pro residues. Composition is skewed to basic and acidic residues over residues 491–535 (TDPK…KVRR), 566–584 (QIDE…EEKA), 591–649 (KKQE…LAEQ), and 683–733 (LERA…KAKE). The tract at residues 494–707 (KTEEKERQRL…EERKKREQQE (214 aa)) is SAH. The segment at 782–856 (LNSDDSTDDE…RTSSAVWHSP (75 aa)) is IN box. Serine 849 and serine 850 each carry phosphoserine.

The protein belongs to the INCENP family. As to quaternary structure, component of the CPC composed of survivin/birc5, incenp, cdca8/borealin and/or cdca9/dasra-A, and aurkb/aurora-B. Interacts (via C-terminus) with aurkb (via N-terminus and kinase domain). Interacts (via N-terminus) with birc5.1, birc5.2, cdca8 and cdca9. Interacts with mtus1.

It is found in the nucleus. It localises to the chromosome. The protein localises to the centromere. Its subcellular location is the cytoplasm. The protein resides in the cytoskeleton. It is found in the spindle. It localises to the midbody. The protein localises to the kinetochore. Functionally, component of the chromosomal passenger complex (CPC), a complex that acts as a key regulator of mitosis. The CPC complex has essential functions at the centromere in ensuring correct chromosome alignment and segregation and is required for chromatin-induced microtubule stabilization and spindle assembly. Acts as a scaffold regulating CPC localization and activity. The C-terminus associates with aurkb/aurora-B, the N-terminus associated with cdca8/borealin and/or cdca9/dasra-A tethers the CPC to the inner centromere, and the microtubule binding activity within the central SAH domain directs aurkb/aurora-B toward substrates near microtubules. Activates aurkb. This is Inner centromere protein A (incenp-a) from Xenopus laevis (African clawed frog).